A 392-amino-acid chain; its full sequence is Riboflavin biosynthesis protein PYRD, chloroplastic (392 aa).

The transit peptide at 1-26 directs the protein to the chloroplast; that stretch reads MASSLVSRPHLTQRPVRAATLASATR. Residues 46–168 enclose the CMP/dCMP-type deaminase domain; it reads LDDAHYMRRC…KLQGAGISVR (123 aa). His95 lines the Zn(2+) pocket. Glu97 acts as the Proton donor in catalysis. 2 residues coordinate Zn(2+): Cys120 and Cys129.

Requires Zn(2+) as cofactor.

The protein localises to the plastid. It is found in the chloroplast. The catalysed reaction is 2,5-diamino-6-hydroxy-4-(5-phosphoribosylamino)-pyrimidine + H2O + H(+) = 5-amino-6-(5-phospho-D-ribosylamino)uracil + NH4(+). The protein operates within cofactor biosynthesis; riboflavin biosynthesis; 5-amino-6-(D-ribitylamino)uracil from GTP: step 2/4. Functionally, monofunctional pyrimidine deaminase involved in the riboflavin biosynthesis pathway. Also has a reductase domain that lacks catalytically essential substrate-binding residues. This Zea mays (Maize) protein is Riboflavin biosynthesis protein PYRD, chloroplastic (PYRD).